The chain runs to 61 residues: Large ribosomal subunit protein bL32 (61 aa).

The span at 1–16 shows a compositional bias: basic residues; the sequence is MAVPKRKTSPSKRGMR. The tract at residues 1–33 is disordered; sequence MAVPKRKTSPSKRGMRRSADGLKAPTYVEDKNS.

Belongs to the bacterial ribosomal protein bL32 family.

The chain is Large ribosomal subunit protein bL32 from Allorhizobium ampelinum (strain ATCC BAA-846 / DSM 112012 / S4) (Agrobacterium vitis (strain S4)).